Reading from the N-terminus, the 597-residue chain is Putative diflavin flavoprotein A 3 (597 aa).

The interval 59 to 254 is zinc metallo-hydrolase; the sequence is QRGTTANSYL…YPAQTYAPSH (196 aa). The Flavodoxin-like domain maps to 283 to 421; that stretch reads VALIYASAYG…MCEEAGTDFA (139 aa). Residues 449–597 are flavodoxin-reductase-like; the sequence is LGRLVGSLCV…VHHRKSGDHY (149 aa).

The protein in the N-terminal section; belongs to the zinc metallo-hydrolase group 3 family. It in the C-terminal section; belongs to the flavodoxin reductase family. The cofactor is Fe cation.

Functionally, mediates electron transfer from NADH to oxygen, reducing it to water. This modular protein has 3 redox cofactors, in other organisms the same activity requires 2 or 3 proteins. This chain is Putative diflavin flavoprotein A 3 (dfa3), found in Synechocystis sp. (strain ATCC 27184 / PCC 6803 / Kazusa).